The chain runs to 92 residues: Putative phosphotransferase enzyme IIB component SgcB (92 aa).

The PTS EIIB type-2 domain occupies 1–92 (MKKILVACGT…KQQIKALLTQ (92 aa)). Catalysis depends on C8, which acts as the Phosphocysteine intermediate.

Its subcellular location is the cytoplasm. Functionally, the phosphoenolpyruvate-dependent sugar phosphotransferase system (sugar PTS), a major carbohydrate active -transport system, catalyzes the phosphorylation of incoming sugar substrates concomitantly with their translocation across the cell membrane. This is Putative phosphotransferase enzyme IIB component SgcB (sgcB) from Escherichia coli (strain K12).